Here is a 209-residue protein sequence, read N- to C-terminus: Response regulator protein VraR (209 aa).

Residues 4–120 (KVLFVDDHEM…DIADAVRKTS (117 aa)) enclose the Response regulatory domain. Aspartate 55 is modified (4-aspartylphosphate). One can recognise an HTH luxR-type domain in the interval 141–206 (RAELYEMLTE…QAVIYAFQHN (66 aa)). The H-T-H motif DNA-binding region spans 165–184 (NQEIASASHITIKTVKTHVS).

In terms of assembly, homodimer. Phosphorylated by VraS. Phosphorylation state of VraR controls dimerization of the protein.

It localises to the cytoplasm. Member of the two-component regulatory system VraS/VraR involved in the control of the cell wall peptidoglycan biosynthesis. Upon cellular stress, the histidine kinase VraS transfers the phosphoryl group onto VraR. Upon phosphorylation, VraR dimerizes at the N-terminal domain. In turn, phosphorylation-induced dimerization expands and enhances the VraR binding to its own promoter leading to increased expression and subsequent modulation of as many as 40 genes, which ultimately constitute the S.aureus response to cell wall damage. In addition, inhibits the host autophagic flux and delays the early stage of autophagosome formation, thereby promoting bacterial survival. Facilitates the ability of S.aureus to resist host polymorphonuclear leukocytes-mediated phagocytosis and killing thus contributing to immune evasion. The sequence is that of Response regulator protein VraR (vraR) from Staphylococcus aureus (strain Mu3 / ATCC 700698).